The sequence spans 372 residues: Bifunctional enzyme IspD/IspF (372 aa).

A 2-C-methyl-D-erythritol 4-phosphate cytidylyltransferase region spans residues 1–211 (MLDISLIMLG…SALKAPENEL (211 aa)). A 2-C-methyl-D-erythritol 2,4-cyclodiphosphate synthase region spans residues 212-372 (FVGSGFDVHE…SLKFYNWTQI (161 aa)). Positions 218 and 220 each coordinate a divalent metal cation. Residues 218–220 (DVH) and 244–245 (HS) each bind 4-CDP-2-C-methyl-D-erythritol 2-phosphate. Position 252 (His-252) interacts with a divalent metal cation. Residues 266–268 (DIG), 271–275 (FPDTD), 342–345 (TTTE), Phe-349, and Arg-352 contribute to the 4-CDP-2-C-methyl-D-erythritol 2-phosphate site.

It in the N-terminal section; belongs to the IspD/TarI cytidylyltransferase family. IspD subfamily. In the C-terminal section; belongs to the IspF family. It depends on a divalent metal cation as a cofactor.

The enzyme catalyses 2-C-methyl-D-erythritol 4-phosphate + CTP + H(+) = 4-CDP-2-C-methyl-D-erythritol + diphosphate. It carries out the reaction 4-CDP-2-C-methyl-D-erythritol 2-phosphate = 2-C-methyl-D-erythritol 2,4-cyclic diphosphate + CMP. The protein operates within isoprenoid biosynthesis; isopentenyl diphosphate biosynthesis via DXP pathway; isopentenyl diphosphate from 1-deoxy-D-xylulose 5-phosphate: step 2/6. Its pathway is isoprenoid biosynthesis; isopentenyl diphosphate biosynthesis via DXP pathway; isopentenyl diphosphate from 1-deoxy-D-xylulose 5-phosphate: step 4/6. Functionally, bifunctional enzyme that catalyzes the formation of 4-diphosphocytidyl-2-C-methyl-D-erythritol from CTP and 2-C-methyl-D-erythritol 4-phosphate (MEP) (IspD), and catalyzes the conversion of 4-diphosphocytidyl-2-C-methyl-D-erythritol 2-phosphate (CDP-ME2P) to 2-C-methyl-D-erythritol 2,4-cyclodiphosphate (ME-CPP) with a corresponding release of cytidine 5-monophosphate (CMP) (IspF). The protein is Bifunctional enzyme IspD/IspF of Campylobacter concisus (strain 13826).